A 206-amino-acid polypeptide reads, in one-letter code: Tumor protein D54 (206 aa).

An N-acetylmethionine modification is found at Met1. Over residues 1-14 the composition is skewed to polar residues; the sequence is MDSAGQDINLNSPN. Positions 1–24 are disordered; it reads MDSAGQDINLNSPNKGLLSDSMTD. Ser3, Ser12, Ser19, and Ser21 each carry phosphoserine. Residues 38–82 adopt a coiled-coil conformation; that stretch reads VEGLTEAEEEELRAELTKVEEEIVTLRQVLAAKERHCGELKRRLG. Residues Ser96, Ser149, and Ser161 each carry the phosphoserine modification. Thr163 is subject to Phosphothreonine. Ser166 bears the Phosphoserine mark. Thr173 is subject to Phosphothreonine. Residues 175–185 are compositionally biased toward basic and acidic residues; it reads KSKVVGDRENG. The interval 175–206 is disordered; sequence KSKVVGDRENGSDNLPSSAGSGDKPLSDPAPF. Phosphoserine is present on residues Ser192 and Ser195.

The protein belongs to the TPD52 family. In terms of assembly, forms a homodimer or heterodimer with other members of the family. Interacts with MAL2.

This chain is Tumor protein D54 (TPD52L2), found in Homo sapiens (Human).